We begin with the raw amino-acid sequence, 179 residues long: Large ribosomal subunit protein uL5 (179 aa).

This sequence belongs to the universal ribosomal protein uL5 family. Part of the 50S ribosomal subunit; part of the 5S rRNA/L5/L18/L25 subcomplex. Contacts the 5S rRNA and the P site tRNA. Forms a bridge to the 30S subunit in the 70S ribosome.

In terms of biological role, this is one of the proteins that bind and probably mediate the attachment of the 5S RNA into the large ribosomal subunit, where it forms part of the central protuberance. In the 70S ribosome it contacts protein S13 of the 30S subunit (bridge B1b), connecting the 2 subunits; this bridge is implicated in subunit movement. Contacts the P site tRNA; the 5S rRNA and some of its associated proteins might help stabilize positioning of ribosome-bound tRNAs. The protein is Large ribosomal subunit protein uL5 of Prochlorococcus marinus (strain MIT 9301).